Here is a 4001-residue protein sequence, read N- to C-terminus: Ankyrin repeat and KH domain-containing protein mask (4001 aa).

Over residues 1 to 14 the composition is skewed to basic and acidic residues; it reads MNNDAKNHESDDLN. 3 disordered regions span residues 1 to 61, 91 to 174, and 391 to 494; these read MNND…NRQL, KNEP…GGGS, and DTDT…FLLD. The segment covering 15 to 30 has biased composition (polar residues); sequence VRSTAYFNQQTTTNQP. Positions 38 to 61 are enriched in low complexity; the sequence is NNTGSGSGSNNNNNNTNQNPNRQL. The segment covering 94–117 has biased composition (polar residues); the sequence is PLTTTESSGVLTNTPLPSNSRLKV. Low complexity predominate over residues 118 to 159; that stretch reads NNNNNTNNTAKMSGTSSSQSSATPTPPTASSSTTTTTTTNIS. The span at 160–174 shows a compositional bias: gly residues; the sequence is TGGGGSGSSGGGGGS. Composition is skewed to acidic residues over residues 408 to 425 and 434 to 486; these read SESEEESVSEDDIPESDP and VRED…EDAP. Phosphoserine is present on S501. ANK repeat units lie at residues 546 to 575, 584 to 614, 618 to 647, 651 to 680, 684 to 713, 718 to 747, 751 to 780, 784 to 813, 817 to 846, 851 to 880, 881 to 910, 914 to 943, 947 to 976, 981 to 1011, and 1014 to 1043; these read SGFSRSLVAACTDNDVNTVKRLLCKGNVNL, DGESLLSMACSAGYYELAQVLLAMSAAQVED, KDSTPLMEAASAGHLDIVKLLLNHNADVNA, TGNTPLMFACAGGQVDVVKVLLKHGANVEE, NGHTPLMEAASAGHVEVAKVLLEHGAGINT, FKESALTLACYKGHLDMVRFLLQAGADQEH, EMHTALMEASMDGHVEVARLLLDSGAQVNM, SFESPLTLAACGGHVELATLLIERGANIEE, EGYTPLMEAAREGHEEMVALLLSKGANINA, TQETALTLACCGGFMEVAAFLIKEGANLEL, GASTPLMEASQEGHTDLVSFLLKKKANVHA, TGDTALTHACENGHTDAAGVLLSYGAELEH, GGRTPLMKACRAGHLCTVKFLIQKGANVNK, NDHTALSLACAGGHQSVVELLLKNNADPFHK, and DNSTMLIEASKGGHTRVVELLFRYPNISPT. Disordered stretches follow at residues 1046–1067 and 1306–1376; these read AASANVTQAAPTSNQPGPNQMR and QPGE…PTAL. A compositionally biased stretch (polar residues) spans 1367 to 1376; the sequence is DNNQPVPTAL. Phosphoserine occurs at positions 1389 and 1588. Disordered stretches follow at residues 1583–1612, 1646–1669, 1682–1779, 1852–1872, 2084–2108, and 2225–2256; these read GDQPKSPTETPPEMEETTMSSPTEADRLGS, SDLESECEDDAEGGAGADCEENTL, EDGI…SLPL, VVHQKQQHGEGDQQCEDDGSA, MAQHQAQQQQGVGEPLTEQQQQQLH, and TPAPSSGVSSTKSMPGGIAKKAIDKQSRKERR. 3 stretches are compositionally biased toward acidic residues: residues 1646–1657, 1685–1704, and 1716–1759; these read SDLESECEDDAE, IIVEEEEDDEEEDDDDEEQD, and DDED…EPDS. Residues 1760 to 1776 show a composition bias toward low complexity; sequence DQGTGNNNNNSKSGASS. Over residues 2084–2093 the composition is skewed to low complexity; sequence MAQHQAQQQQ. The segment covering 2228–2237 has biased composition (polar residues); the sequence is PSSGVSSTKS. 10 ANK repeats span residues 2312 to 2341, 2345 to 2374, 2379 to 2408, 2412 to 2441, 2447 to 2476, 2481 to 2510, 2514 to 2543, 2549 to 2578, 2582 to 2611, and 2615 to 2644; these read NHDTALTLACAGGHEELVELLINRGANIEH, KGFTPLILAATAGHDKVVDILLKHSAELEA, TKDTPLSLACSGGRYEVVELLLSVGANKEH, SDYTPLSLAASGGYVNIIKLLLSHGAEINS, LGISPLMLAAMNGHTPAVKLLLDQGSDINA, NRNTALTLACFQGRHEVVSLLLDRRANVEH, TGLTPLMEAASGGYIEVGRVLLDKGADVNA, SRDTALTIAADKGHQKFVELLLSRNASVEV, KGNSPLWLAAHGGHLSVVELLYDHNADIDS, and RRVSCLMAAFRKGHTKIVKWMVQYVSQFPS. Residues 2674-2732 adopt a coiled-coil conformation; that stretch reads AKEAQAVKANKNASILLEELDLERTREESRKAAAARRRERKKKKKMEKKEEKRRQQQGN. S2687 bears the Phosphoserine mark. T2698 is subject to Phosphothreonine. Positions 2699–3033 are disordered; the sequence is REESRKAAAA…TSTTTAASSV (335 aa). A compositionally biased stretch (basic residues) spans 2706-2719; the sequence is AAARRRERKKKKKM. The segment covering 2739–2762 has biased composition (acidic residues); that stretch reads MQGDDDDASDKDDDSDKDDEDEEA. Phosphoserine is present on residues S2747 and S2753. The span at 2793-2810 shows a compositional bias: low complexity; sequence SQSAQAAEAAANSVSTNS. Polar residues predominate over residues 2828–2839; sequence EPTQPVITSNSV. Basic and acidic residues predominate over residues 2868–2886; it reads RQLDVKKEEPALKKKEEKN. A compositionally biased stretch (low complexity) spans 2906–2941; the sequence is ALPAKQQPSSSSKLQSSESASNINSSTATNTSSANT. The segment covering 2950–2960 has biased composition (polar residues); sequence ASQTASATTLN. The span at 2963–2975 shows a compositional bias: basic and acidic residues; sequence KRTEVDGWKEVVR. A compositionally biased stretch (polar residues) spans 2995–3004; that stretch reads TATSSATSVQ. Positions 3012–3032 are enriched in low complexity; the sequence is ANSSSNSSSSLTTSTTTAASS. Residues 3036-3100 form the KH domain; that stretch reads MTCKKVQVPV…DATKQAHMLI (65 aa). Composition is skewed to low complexity over residues 3156-3178, 3195-3227, and 3244-3257; these read ASTTSTSSSSSASSTTPAGASYS, SGRSSTSVKSNGSSTKVSASSGSGSRSGRAGSS, and NGVIKSKSESSSKS. Disordered regions lie at residues 3156 to 3329, 3383 to 3457, 3520 to 3636, and 3744 to 3786; these read ASTT…GQGG, KPIA…QTSQ, AVGD…PPTA, and IFPQ…GGAA. The span at 3262 to 3278 shows a compositional bias: polar residues; it reads QKSSTTLGKSSTVSPGA. The segment covering 3396–3416 has biased composition (low complexity); sequence GSPTQVQQQHQTQQQQQQQLP. Over residues 3417–3427 the composition is skewed to pro residues; it reads QPAPVPGPQPQ. Residues 3428–3457 show a composition bias toward low complexity; that stretch reads QQPLQQQQQQQAPQQQPQQPNQQQQPQTSQ. A compositionally biased stretch (polar residues) spans 3539–3559; sequence NILSSPVGSSKASSNHSTSPP. The segment covering 3565–3577 has biased composition (low complexity); the sequence is QQQQQQQPQSSQQ. Position 3596 is a phosphoserine (S3596). A compositionally biased stretch (low complexity) spans 3774–3786; it reads PPGTGARQPGGAA. Phosphoserine occurs at positions 3820, 3822, and 3825. Positions 3876 to 3945 are disordered; sequence KAQPPGLQQP…HNMQAPPNMS (70 aa). The span at 3891-3910 shows a compositional bias: low complexity; sequence SQQQQQQPLNWLKQQPQQQQ.

As to quaternary structure, may interact with Unc-89 (via protein kinase domain 1 or 2). In terms of tissue distribution, expressed ubiquitously in eye imaginal disk, slightly higher expression is seen in presumptive photoreceptors. Expressed in indirect flight muscle (IFM) (at protein level).

It is found in the cytoplasm. The protein localises to the myofibril. It localises to the sarcomere. Its subcellular location is the z line. The protein resides in the m line. Functionally, mediator of receptor tyrosine kinase (RTK) signaling, and may act either downstream of MAPK or transduce signaling through a parallel branch of the RTK pathway. Required for the development and organization of indirect flight muscle sarcomeres by regulating the formation of M line and H zone and the correct assembly of thick and thin filaments in the sarcomere. This Drosophila melanogaster (Fruit fly) protein is Ankyrin repeat and KH domain-containing protein mask.